The sequence spans 166 residues: Large ribosomal subunit protein bL9 (166 aa).

It belongs to the bacterial ribosomal protein bL9 family.

In terms of biological role, binds to the 23S rRNA. The sequence is that of Large ribosomal subunit protein bL9 from Borrelia garinii subsp. bavariensis (strain ATCC BAA-2496 / DSM 23469 / PBi) (Borreliella bavariensis).